A 311-amino-acid polypeptide reads, in one-letter code: Methionyl-tRNA formyltransferase (311 aa).

110-113 (SLLP) is a binding site for (6S)-5,6,7,8-tetrahydrofolate.

The protein belongs to the Fmt family.

The enzyme catalyses L-methionyl-tRNA(fMet) + (6R)-10-formyltetrahydrofolate = N-formyl-L-methionyl-tRNA(fMet) + (6S)-5,6,7,8-tetrahydrofolate + H(+). Attaches a formyl group to the free amino group of methionyl-tRNA(fMet). The formyl group appears to play a dual role in the initiator identity of N-formylmethionyl-tRNA by promoting its recognition by IF2 and preventing the misappropriation of this tRNA by the elongation apparatus. This chain is Methionyl-tRNA formyltransferase, found in Streptococcus pyogenes serotype M12 (strain MGAS2096).